The sequence spans 518 residues: Glutamate--cysteine ligase (518 aa).

This sequence belongs to the glutamate--cysteine ligase type 1 family. Type 1 subfamily.

It catalyses the reaction L-cysteine + L-glutamate + ATP = gamma-L-glutamyl-L-cysteine + ADP + phosphate + H(+). It functions in the pathway sulfur metabolism; glutathione biosynthesis; glutathione from L-cysteine and L-glutamate: step 1/2. This chain is Glutamate--cysteine ligase, found in Salmonella arizonae (strain ATCC BAA-731 / CDC346-86 / RSK2980).